Here is a 107-residue protein sequence, read N- to C-terminus: MSTSELACTYAALILHDDGLEITADNINTICKAAGVEVEGYWPALFAKLFAKKSMDDLITNVGAGGGAAPAAAAPAAGGAPAAGAAPKKEEKKEPSEEEDMGFSLFD.

Residues 67 to 107 (GAAPAAAAPAAGGAPAAGAAPKKEEKKEPSEEEDMGFSLFD) form a disordered region. The span at 69 to 86 (APAAAAPAAGGAPAAGAA) shows a compositional bias: low complexity.

It belongs to the eukaryotic ribosomal protein P1/P2 family. As to quaternary structure, P1 and P2 exist as dimers at the large ribosomal subunit.

Functionally, plays an important role in the elongation step of protein synthesis. The protein is Large ribosomal subunit protein P1 of Chlamydomonas reinhardtii (Chlamydomonas smithii).